A 502-amino-acid chain; its full sequence is GTPase Obg (502 aa).

The Obg domain occupies 2-159 (NRFIDRVVLH…HDLILELKSM (158 aa)). Residues 160 to 341 (ADVGLVGFPS…LKYKLLEIVQ (182 aa)) form the OBG-type G domain. GTP-binding positions include 166-173 (GFPSAGKS), 191-195 (FTTLQ), 212-215 (DVPG), 292-295 (NKAD), and 322-324 (SAV). Residues serine 173 and threonine 193 each coordinate Mg(2+). The OCT domain occupies 364–444 (DGRRRREEFE…IGGVTFEWEP (81 aa)).

It belongs to the TRAFAC class OBG-HflX-like GTPase superfamily. OBG GTPase family. Monomer. It depends on Mg(2+) as a cofactor.

The protein localises to the cytoplasm. In terms of biological role, an essential GTPase which binds GTP, GDP and possibly (p)ppGpp with moderate affinity, with high nucleotide exchange rates and a fairly low GTP hydrolysis rate. Plays a role in control of the cell cycle, stress response, ribosome biogenesis and in those bacteria that undergo differentiation, in morphogenesis control. This is GTPase Obg from Corynebacterium efficiens (strain DSM 44549 / YS-314 / AJ 12310 / JCM 11189 / NBRC 100395).